The primary structure comprises 336 residues: Protein ABHD13 (336 aa).

Residues 37–57 form a helical; Signal-anchor for type II membrane protein membrane-spanning segment; it reads FNMYGGVILLLLIFVSIAGIL. Residues serine 193, aspartate 268, and histidine 298 each act as charge relay system in the active site. N-linked (GlcNAc...) asparagine glycosylation occurs at asparagine 299.

It belongs to the serine esterase family.

The protein resides in the membrane. This Xenopus laevis (African clawed frog) protein is Protein ABHD13.